The sequence spans 77 residues: Large ribosomal subunit protein bL28 (77 aa).

This sequence belongs to the bacterial ribosomal protein bL28 family.

This is Large ribosomal subunit protein bL28 from Polaromonas sp. (strain JS666 / ATCC BAA-500).